The sequence spans 37 residues: M-oxotoxin-Ot2b (37 aa).

As to expression, expressed by the venom gland.

The protein resides in the secreted. Functionally, disrupts biological membranes, particularly those rich in phosphocholine. Has antimicrobial activity against Gram-negative bacterium E.coli, Gram-positive bacteria B.subtilis and S.aureus, and hemolytic activity against sheep, pig and guinea pig red blood cells. Has insecticidal activity against S.frugiperda ovarian cells by opening non-selective ion channels. Enhances the insecticidal activity of spider venom neurotoxic peptides. This Oxyopes takobius (Lynx spider) protein is M-oxotoxin-Ot2b.